The sequence spans 373 residues: 4-hydroxy-3-methylbut-2-en-1-yl diphosphate synthase (flavodoxin) (373 aa).

Residues cysteine 268, cysteine 271, cysteine 303, and glutamate 310 each coordinate [4Fe-4S] cluster.

This sequence belongs to the IspG family. It depends on [4Fe-4S] cluster as a cofactor.

It catalyses the reaction (2E)-4-hydroxy-3-methylbut-2-enyl diphosphate + oxidized [flavodoxin] + H2O + 2 H(+) = 2-C-methyl-D-erythritol 2,4-cyclic diphosphate + reduced [flavodoxin]. It participates in isoprenoid biosynthesis; isopentenyl diphosphate biosynthesis via DXP pathway; isopentenyl diphosphate from 1-deoxy-D-xylulose 5-phosphate: step 5/6. In terms of biological role, converts 2C-methyl-D-erythritol 2,4-cyclodiphosphate (ME-2,4cPP) into 1-hydroxy-2-methyl-2-(E)-butenyl 4-diphosphate. The sequence is that of 4-hydroxy-3-methylbut-2-en-1-yl diphosphate synthase (flavodoxin) from Exiguobacterium sp. (strain ATCC BAA-1283 / AT1b).